We begin with the raw amino-acid sequence, 208 residues long: MKAIFITLEGPDGSGKTTVGTLLNQKMTEAGIDFIKTREPGGSPISEKVRNIVLGIGNEEMDPKTEVLLIAGARRQHVVETIRPALAAGKTVLCDRFMDSSLAYQGAGRDMNMEQVLQVNLYAIEDTLPDRTYYLDVPAEVGLARIAANKGREVNRLDKEDITYHEKVQAGYEKVINMFPERFMRVDATKTPEEITETILADILRQLA.

10–17 serves as a coordination point for ATP; that stretch reads GPDGSGKT.

It belongs to the thymidylate kinase family.

It catalyses the reaction dTMP + ATP = dTDP + ADP. Functionally, phosphorylation of dTMP to form dTDP in both de novo and salvage pathways of dTTP synthesis. The polypeptide is Thymidylate kinase (Listeria monocytogenes serotype 4b (strain CLIP80459)).